A 391-amino-acid chain; its full sequence is Esterase (391 aa).

The signal sequence occupies residues 1–26 (MEFPETNNNPIITLSFLLCMLSLAYA). The active-site Nucleophile is Ser-41. N-linked (GlcNAc...) asparagine glycosylation is found at Asn-186, Asn-193, and Asn-313. Residues Asp-347 and His-350 contribute to the active site.

It belongs to the 'GDSL' lipolytic enzyme family. The N-terminus is blocked. In terms of processing, glycosylated.

Functionally, has lipase and esterase activities. May be involved in plant defense. The polypeptide is Esterase (Hevea brasiliensis (Para rubber tree)).